We begin with the raw amino-acid sequence, 953 residues long: ABC transporter A family member 11 (953 aa).

Helical transmembrane passes span 33–53 (CLQI…EEAM), 230–250 (GPVF…GALV), 277–297 (TWEG…GMIF), 307–327 (FVLV…LAFA), 341–361 (VGFL…TGFP), and 417–437 (VISI…WFVL). Residues 519-764 (VQIHGLAKTY…FGTGFVATVS (246 aa)) form the ABC transporter domain. 565–572 (GPNGAGKT) provides a ligand contact to ATP.

This sequence belongs to the ABC transporter superfamily. ABCA family. CPR flippase (TC 3.A.1.211) subfamily.

It localises to the membrane. This chain is ABC transporter A family member 11 (ABCA11), found in Arabidopsis thaliana (Mouse-ear cress).